The sequence spans 397 residues: Tryptophan synthase beta chain (397 aa).

At Lys-86 the chain carries N6-(pyridoxal phosphate)lysine.

The protein belongs to the TrpB family. In terms of assembly, tetramer of two alpha and two beta chains. It depends on pyridoxal 5'-phosphate as a cofactor.

It carries out the reaction (1S,2R)-1-C-(indol-3-yl)glycerol 3-phosphate + L-serine = D-glyceraldehyde 3-phosphate + L-tryptophan + H2O. The protein operates within amino-acid biosynthesis; L-tryptophan biosynthesis; L-tryptophan from chorismate: step 5/5. Functionally, the beta subunit is responsible for the synthesis of L-tryptophan from indole and L-serine. The sequence is that of Tryptophan synthase beta chain from Edwardsiella ictaluri (strain 93-146).